The sequence spans 942 residues: E3 ubiquitin-protein ligase HACE1 (942 aa).

7 ANK repeats span residues 23-55 (LPDDNETAVYTLMPMVMADQHRSVSELLSNSKF), 64-93 (VKRSLLHIAANCGSVECLVLLLKKGANPNY), 97-126 (SGCTPLHLAARNGQKKCMSKLLEYSADVNI), 130-159 (EGLTAIHWLAVNGRTELLHDLVQHVSNVDV), 163-192 (MGQTALHVACQNGHKTTVQCLLDSGADINR), 196-226 (SGATPLYFACSHGQRDTAQILLMRGAKYLPD), and 228-253 (NGITPLDLCVQGGYGETCEVLIQYHP). The segment at 428–459 (KGPDHQDATPTPSFAAAGTESRKELSTDTGDS) is disordered. A compositionally biased stretch (basic and acidic residues) spans 447–459 (ESRKELSTDTGDS). The 336-residue stretch at 607–942 (NCAKLKQGIA…HCGSYGYTMA (336 aa)) folds into the HECT domain. Cys909 functions as the Glycyl thioester intermediate in the catalytic mechanism.

It is found in the golgi apparatus. The protein localises to the golgi stack membrane. It localises to the cytoplasm. Its subcellular location is the endoplasmic reticulum. It carries out the reaction S-ubiquitinyl-[E2 ubiquitin-conjugating enzyme]-L-cysteine + [acceptor protein]-L-lysine = [E2 ubiquitin-conjugating enzyme]-L-cysteine + N(6)-ubiquitinyl-[acceptor protein]-L-lysine.. It participates in protein modification; protein ubiquitination. E3 ubiquitin-protein ligase involved in Golgi membrane fusion and regulation of small GTPases. Acts as a regulator of Golgi membrane dynamics during the cell cycle: recruited to Golgi membrane by Rab proteins and regulates postmitotic Golgi membrane fusion. Acts by mediating ubiquitination during mitotic Golgi disassembly, ubiquitination serving as a signal for Golgi reassembly later, after cell division. The sequence is that of E3 ubiquitin-protein ligase HACE1 (HACE1) from Gallus gallus (Chicken).